The primary structure comprises 196 residues: dCTP deaminase, dUMP-forming (196 aa).

DCTP contacts are provided by residues 101–106 (KSSLGR), Asp119, 127–129 (TLE), Gln148, Tyr162, and Gln174. Glu129 acts as the Proton donor/acceptor in catalysis.

It belongs to the dCTP deaminase family. As to quaternary structure, homotrimer.

The catalysed reaction is dCTP + 2 H2O = dUMP + NH4(+) + diphosphate. The protein operates within pyrimidine metabolism; dUMP biosynthesis; dUMP from dCTP: step 1/1. Bifunctional enzyme that catalyzes both the deamination of dCTP to dUTP and the hydrolysis of dUTP to dUMP without releasing the toxic dUTP intermediate. The sequence is that of dCTP deaminase, dUMP-forming from Thermobifida fusca (strain YX).